The chain runs to 238 residues: Monocyte to macrophage differentiation factor (238 aa).

Residues 1 to 28 (MRFRNRFQRFMNHRAPANGRYKPTCYEH) are Cytoplasmic-facing. The chain crosses the membrane as a helical span at residues 29–49 (AANCYTHAFLIVPAIVGSALL). At 50–61 (HRLSDDCWEKIT) the chain is on the lumenal side. Residues 62–82 (AWIYGMGLCALFIVSTVFHIV) form a helical membrane-spanning segment. Residues 83–101 (SWKKSHLRTVEHCFHMCDR) are Cytoplasmic-facing. The helical transmembrane segment at 102-122 (MVIYFFIAASYAPWLNLRELG) threads the bilayer. Position 123 (P123) is a topological domain, lumenal. Residues 124–144 (LASHMRWFIWLMAAGGTIYVF) traverse the membrane as a helical segment. Residues 145–151 (LYHEKYK) are Cytoplasmic-facing. A helical membrane pass occupies residues 152 to 172 (VVELFFYLTMGFSPALVVTSM). Residues 173 to 174 (NN) are Lumenal-facing. Residues 175–195 (TDGLQELACGGLIYCLGVVFF) traverse the membrane as a helical segment. Over 196 to 198 (KSD) the chain is Cytoplasmic. The chain crosses the membrane as a helical span at residues 199–219 (GIIPFAHAIWHLFVATAAAVH). The Lumenal segment spans residues 220 to 238 (YYAIWKYLYRSPTDFIRHL).

Belongs to the ADIPOR family.

It localises to the late endosome membrane. The protein localises to the lysosome membrane. Functionally, involved in the dynamics of lysosomal membranes associated with microglial activation following brain lesion. This Mus musculus (Mouse) protein is Monocyte to macrophage differentiation factor.